A 202-amino-acid chain; its full sequence is Securin (202 aa).

An N-acetylalanine modification is found at Ala2. Residues 35–90 (LDGRSQVSTPRFGKTFDAPPALPKATRKALGTVNRATEKSVKTKGPLKQKQPSFSA) form a disordered region. Positions 61–64 (RKAL) match the D-box motif. Short sequence motifs (TEK-box) lie at residues 71-73 (TEK) and 94-96 (TEK). The SH3-binding signature appears at 163-173 (PPSPVKMPSPP). Ser165 bears the Phosphoserine; by CDK1 mark.

It belongs to the securin family. Interacts with RPS10 and DNAJA1. Interacts with the caspase-like ESPL1, and prevents its protease activity probably by covering its active site. Interacts with TP53 and blocks its activity probably by blocking its binding to DNA. Interacts with the Ku 70 kDa subunit of ds-DNA kinase. Interacts with PTTG1IP. In terms of processing, phosphorylated at Ser-165 by CDK1 during mitosis. Phosphorylated in vitro by ds-DNA kinase. Post-translationally, ubiquitinated through 'Lys-11' linkage of ubiquitin moieties by the anaphase promoting complex (APC) at the onset of anaphase, conducting to its degradation. 'Lys-11'-linked ubiquitination is mediated by the E2 ligase UBE2C/UBCH10. Expressed at low level in most tissues, except in adult testis, where it is highly expressed. Overexpressed in many patients suffering from pituitary adenomas, primary epithelial neoplasias, and esophageal cancer.

The protein localises to the cytoplasm. The protein resides in the nucleus. Its function is as follows. Regulatory protein, which plays a central role in chromosome stability, in the p53/TP53 pathway, and DNA repair. Probably acts by blocking the action of key proteins. During the mitosis, it blocks Separase/ESPL1 function, preventing the proteolysis of the cohesin complex and the subsequent segregation of the chromosomes. At the onset of anaphase, it is ubiquitinated, conducting to its destruction and to the liberation of ESPL1. Its function is however not limited to a blocking activity, since it is required to activate ESPL1. Negatively regulates the transcriptional activity and related apoptosis activity of TP53. The negative regulation of TP53 may explain the strong transforming capability of the protein when it is overexpressed. May also play a role in DNA repair via its interaction with Ku, possibly by connecting DNA damage-response pathways with sister chromatid separation. The polypeptide is Securin (PTTG1) (Homo sapiens (Human)).